The sequence spans 294 residues: Maltose/maltodextrin import ATP-binding protein MalK (294 aa).

The ABC transporter domain maps to 4 to 233 (VQLRNVTKAW…PADRFVAGFI (230 aa)). ATP is bound at residue 36-43 (GPSGCGKS).

Belongs to the ABC transporter superfamily. Maltooligosaccharide importer (TC 3.A.1.1.1) family. As to quaternary structure, the complex is composed of two ATP-binding proteins (MalK), two transmembrane proteins (MalG and MalK) and a solute-binding protein (MalE).

The protein resides in the cell inner membrane. It catalyses the reaction D-maltose(out) + ATP + H2O = D-maltose(in) + ADP + phosphate + H(+). Functionally, part of the ABC transporter complex MalEFGK involved in maltose/maltodextrin import. Responsible for energy coupling to the transport system. The chain is Maltose/maltodextrin import ATP-binding protein MalK from Klebsiella aerogenes (Enterobacter aerogenes).